The primary structure comprises 2190 residues: Integrator complex subunit 1 (2190 aa).

A disordered region spans residues 1-61 (MNRAKPTTVR…GLPSERKRDA (61 aa)). Ser13 is modified (phosphoserine). Residues 34-44 (GQANESKTAST) show a composition bias toward polar residues. Lys47 carries the N6-acetyllysine modification. The residue at position 83 (Thr83) is a Phosphothreonine. Phosphoserine is present on residues Ser87, Ser307, and Ser924. Residues 922-945 (AASGEEDDEGESKEQKAKKRQRQQ) are disordered. A compositionally biased stretch (acidic residues) spans 923 to 932 (ASGEEDDEGE). The helical transmembrane segment at 1159–1179 (TATMHILVVHAMVILLTLGPP) threads the bilayer. The segment at 1311–1334 (SLPPRRDSTEAPKPKSSPEQPIGQ) is disordered. Residues 1314–1323 (PRRDSTEAPK) show a composition bias toward basic and acidic residues. Ser1318, Ser1326, Ser1327, and Ser1395 each carry phosphoserine.

It belongs to the Integrator subunit 1 family. In terms of assembly, component of the Integrator complex, composed of core subunits INTS1, INTS2, INTS3, INTS4, INTS5, INTS6, INTS7, INTS8, INTS9/RC74, INTS10, INTS11/CPSF3L, INTS12, INTS13, INTS14 and INTS15. The core complex associates with protein phosphatase 2A subunits PPP2CA and PPP2R1A, to form the Integrator-PP2A (INTAC) complex. Interacts with ESRRB, ESRRB is not a core component of the Integrator complex and this association is a bridge for the interaction with the multiprotein complex Integrator; attracts the transcriptional machinery.

It is found in the nucleus. It localises to the nucleus membrane. Its function is as follows. Component of the integrator complex, a multiprotein complex that terminates RNA polymerase II (Pol II) transcription in the promoter-proximal region of genes. The integrator complex provides a quality checkpoint during transcription elongation by driving premature transcription termination of transcripts that are unfavorably configured for transcriptional elongation: the complex terminates transcription by (1) catalyzing dephosphorylation of the C-terminal domain (CTD) of Pol II subunit POLR2A/RPB1 and SUPT5H/SPT5, (2) degrading the exiting nascent RNA transcript via endonuclease activity and (3) promoting the release of Pol II from bound DNA. The integrator complex is also involved in terminating the synthesis of non-coding Pol II transcripts, such as enhancer RNAs (eRNAs), small nuclear RNAs (snRNAs), telomerase RNAs and long non-coding RNAs (lncRNAs). Within the integrator complex, INTS1 is involved in the post-termination step: INTS1 displaces INTS3 and the SOSS factors, allowing the integrator complex to return to the closed conformation, ready to bind to the paused elongation complex for another termination cycle. Mediates recruitment of cytoplasmic dynein to the nuclear envelope, probably as component of the integrator complex. This Homo sapiens (Human) protein is Integrator complex subunit 1.